The following is a 205-amino-acid chain: Mediator of RNA polymerase II transcription subunit 29 (205 aa).

The segment covering 1-27 (MNPNMNMMQMSGPPMMQVSPMMQSSPQ) has biased composition (low complexity). Residues 1–65 (MNPNMNMMQM…QQQQQQAEKL (65 aa)) form a disordered region. The segment covering 28–38 (PMMPTGPPGPV) has biased composition (pro residues). Positions 39–61 (PMQQQHQQQQQQQQQQQQQQQQQ) are enriched in low complexity.

Belongs to the Mediator complex subunit 29 family. In terms of assembly, component of the Mediator complex.

It localises to the nucleus. Functionally, component of the Mediator complex, a coactivator involved in the regulated transcription of nearly all RNA polymerase II-dependent genes. Mediator functions as a bridge to convey information from gene-specific regulatory proteins to the basal RNA polymerase II transcription machinery. Mediator is recruited to promoters by direct interactions with regulatory proteins and serves as a scaffold for the assembly of a functional preinitiation complex with RNA polymerase II and the general transcription factors. This is Mediator of RNA polymerase II transcription subunit 29 (ix) from Drosophila virilis (Fruit fly).